A 295-amino-acid polypeptide reads, in one-letter code: MDVDKLIEAGKIAKKVREEAVKLAKPGVSLLELAEKIESRIVELGGKPAFPANLSLNEVAAHYTPYKGDQTVLKEGDYLKIDLGVHIDGYIADTAVTVRVGMDFDELMEAAKEALESAISVARAGVEVKELGKAIENEIRKRGFNPIVNLSGHKIERYKLHAGVSIPNIYRPHDNYVLQEGDVFAIEPFATTGAGQVIEVPPTLIYMYVRDAPVRMAQARFLLAKIKREYKTLPFAYRWLQGEMPEGQLKLALRSLERSGALYGYPVLREIRGGMVTQFEHTIIVEKDSVTVTTE.

Substrate is bound at residue His-62. A divalent metal cation-binding residues include Asp-82, Asp-93, and His-153. Residue His-161 coordinates substrate. Glu-187 and Glu-280 together coordinate a divalent metal cation.

It belongs to the peptidase M24A family. Methionine aminopeptidase archaeal type 2 subfamily. As to quaternary structure, monomer. Co(2+) serves as cofactor. The cofactor is Zn(2+). It depends on Mn(2+) as a cofactor. Fe(2+) is required as a cofactor.

The catalysed reaction is Release of N-terminal amino acids, preferentially methionine, from peptides and arylamides.. In terms of biological role, removes the N-terminal methionine from nascent proteins. The N-terminal methionine is often cleaved when the second residue in the primary sequence is small and uncharged (Met-Ala-, Cys, Gly, Pro, Ser, Thr, or Val). In Pyrococcus horikoshii (strain ATCC 700860 / DSM 12428 / JCM 9974 / NBRC 100139 / OT-3), this protein is Methionine aminopeptidase.